A 134-amino-acid polypeptide reads, in one-letter code: Profilin-3 (134 aa).

An intrachain disulfide couples C13 to C118. The Involved in PIP2 interaction signature appears at 84–100; sequence AVIRGKKGSGGITIKKT. Position 114 is a phosphothreonine (T114).

Belongs to the profilin family. As to quaternary structure, occurs in many kinds of cells as a complex with monomeric actin in a 1:1 ratio. Phosphorylated by MAP kinases.

It is found in the cytoplasm. Its subcellular location is the cytoskeleton. In terms of biological role, binds to actin and affects the structure of the cytoskeleton. At high concentrations, profilin prevents the polymerization of actin, whereas it enhances it at low concentrations. This Olea europaea (Common olive) protein is Profilin-3.